A 199-amino-acid chain; its full sequence is Recombination protein RecR (199 aa).

The C4-type zinc finger occupies 58 to 73; sequence CSVCNNITDVDPCVFC. Residues 81–176 form the Toprim domain; sequence RLVCVVEEPT…RLTRIATGVP (96 aa).

Belongs to the RecR family.

May play a role in DNA repair. It seems to be involved in an RecBC-independent recombinational process of DNA repair. It may act with RecF and RecO. In Acidobacterium capsulatum (strain ATCC 51196 / DSM 11244 / BCRC 80197 / JCM 7670 / NBRC 15755 / NCIMB 13165 / 161), this protein is Recombination protein RecR.